Here is a 317-residue protein sequence, read N- to C-terminus: Ribosomal protein L11 methyltransferase (317 aa).

The S-adenosyl-L-methionine site is built by T139, G162, D184, and N226. Residues 274–297 form a disordered region; the sequence is EHVATRPDPASPGGDRRAGRGDAG.

The protein belongs to the methyltransferase superfamily. PrmA family.

The protein localises to the cytoplasm. It catalyses the reaction L-lysyl-[protein] + 3 S-adenosyl-L-methionine = N(6),N(6),N(6)-trimethyl-L-lysyl-[protein] + 3 S-adenosyl-L-homocysteine + 3 H(+). Methylates ribosomal protein L11. This is Ribosomal protein L11 methyltransferase from Sorangium cellulosum (strain So ce56) (Polyangium cellulosum (strain So ce56)).